A 71-amino-acid chain; its full sequence is 26S proteasome complex subunit rpn15 (71 aa).

Residues 1–38 (MSRAALPSLENLEDDDEFEDFATENWPMKDTELDTGDD) form a disordered region. Residues 11–22 (NLEDDDEFEDFA) show a composition bias toward acidic residues. The tract at residues 16–25 (DEFEDFATEN) is UBS-II. The interval 38-49 (DTLWENNWDDED) is UBS-I.

This sequence belongs to the DSS1/SEM1 family. As to quaternary structure, interacts with mlo3, rae1, nup98/nup189 and nup146. Interacts with rad24. Interacts (via UBSs) with ubiquitin (ubi3/ubi5).

Its subcellular location is the cytoplasm. The protein resides in the nucleus. In terms of biological role, versatile protein that might stabilize multiple protein complexes involved in diverse pathways. Subunit of the 26S proteasome which plays a role in ubiquitin-dependent proteolysis. Acts as a ubiquitin receptor of the 26S proteasome, by interacting with ubiquitin chains linked by 'Lys-63' and 'Lys-48'. Involved in nuclear export of specific sets of mRNAs. Links the mRNA adapter mlo3 to rae1 for targeting mRNA-protein complex to the proteins of the nucleoporin complex (NPC). Involved in recombinational repair of DNA. Plays a critical role in linking repair and checkpoint factors to damaged DNA sites by specifically recruiting rad24 and cdc25 to the DSBs. The chain is 26S proteasome complex subunit rpn15 (rpn15) from Schizosaccharomyces pombe (strain 972 / ATCC 24843) (Fission yeast).